The sequence spans 109 residues: Biphenyl dioxygenase system ferredoxin subunit (109 aa).

A Rieske domain is found at 4–100 (TRVCDRRDVP…IRIEDNDVLV (97 aa)). [2Fe-2S] cluster-binding residues include Cys43, His45, Cys63, and His66.

The protein belongs to the bacterial ring-hydroxylating dioxygenase ferredoxin component family. This dioxygenase system consists of four proteins: the two subunits of the hydroxylase component (BphA and BphE), a ferredoxin (BphF) and a ferredoxin reductase (BphG).

Functionally, this protein seems to be a 2Fe-2S ferredoxin. The sequence is that of Biphenyl dioxygenase system ferredoxin subunit (bphF) from Paraburkholderia xenovorans (strain LB400).